Consider the following 101-residue polypeptide: Thrombin-like enzyme okinaxobin-1 (101 aa).

A signal peptide spans 1 to 16; it reads LIRVLANLLILQLSYA. Residues 17 to 22 constitute a propeptide that is removed on maturation; it reads QKSSEL. Positions 23-101 constitute a Peptidase S1 domain; sequence VIGGDECNIN…PKKKYFFRCR (79 aa). Cysteines 50 and 66 form a disulfide. Histidine 65 serves as the catalytic Charge relay system.

Belongs to the peptidase S1 family. Snake venom subfamily. In terms of assembly, monomer. Post-translationally, glycosylated. As to expression, expressed by the venom gland.

The protein localises to the secreted. Its activity is regulated as follows. Strongly inactivated by diisopropylfluorophosphate (DFP) and phenylmethanesulfonyl fluoride (PMSF), and to a lesser extent by tosyl-L-lysine chloromethyl ketone (TLCK). In terms of biological role, thrombin-like snake venom serine protease that releases specifically fibrinopeptide B from fibrinogen (FGB) to form fibrin clots. Shows a preferential cleavage at Arg-|-Gly bonds in fibrinogen beta chains. Cleaves fibrinogen beta chains preferentially to alpha chains. This chain is Thrombin-like enzyme okinaxobin-1, found in Ovophis okinavensis (Ryukyu Island pit viper).